The primary structure comprises 226 residues: Glutathione S-transferase kappa 1 (226 aa).

Ser-16–Tyr-18 lines the glutathione pocket. Residues Lys-36 and Lys-49 each carry the N6-succinyllysine modification. Residue Asn-53 coordinates glutathione. An N6-acetyllysine; alternate mark is found at Lys-68 and Lys-74. An N6-succinyllysine; alternate mark is found at Lys-68 and Lys-74. Position 85 is an N6-acetyllysine (Lys-85). An N6-acetyllysine; alternate mark is found at Lys-93 and Lys-116. Residues Lys-93 and Lys-116 each carry the N6-succinyllysine; alternate modification. Lys-144 is subject to N6-succinyllysine. Position 158 is an N6-acetyllysine; alternate (Lys-158). Position 158 is an N6-succinyllysine; alternate (Lys-158). Lys-165 carries the post-translational modification N6-acetyllysine. Lys-167 and Lys-177 each carry N6-acetyllysine; alternate. Residues Lys-167 and Lys-177 each carry the N6-succinyllysine; alternate modification. Leu-183 lines the glutathione pocket. Residue Lys-193 is modified to N6-succinyllysine. Position 200–201 (Ser-200–Asp-201) interacts with glutathione.

This sequence belongs to the GST superfamily. Kappa family. Homodimer.

Its subcellular location is the mitochondrion matrix. The enzyme catalyses RX + glutathione = an S-substituted glutathione + a halide anion + H(+). Its function is as follows. Glutathione S-transferase that catalyzes the conjugation of glutathione to exogenous and endogenous compounds. The chain is Glutathione S-transferase kappa 1 (Gstk1) from Rattus norvegicus (Rat).